A 464-amino-acid chain; its full sequence is Argininosuccinate lyase (464 aa).

The protein belongs to the lyase 1 family. Argininosuccinate lyase subfamily.

Its subcellular location is the cytoplasm. The enzyme catalyses 2-(N(omega)-L-arginino)succinate = fumarate + L-arginine. It participates in amino-acid biosynthesis; L-arginine biosynthesis; L-arginine from L-ornithine and carbamoyl phosphate: step 3/3. This is Argininosuccinate lyase from Pseudomonas syringae pv. syringae (strain B728a).